The chain runs to 63 residues: Large ribosomal subunit protein bL32 (63 aa).

The tract at residues 1-20 (MANPKAKMSKSRRDKRRAQF) is disordered. Residues 7–18 (KMSKSRRDKRRA) show a composition bias toward basic residues.

Belongs to the bacterial ribosomal protein bL32 family.

In Chlorobaculum tepidum (strain ATCC 49652 / DSM 12025 / NBRC 103806 / TLS) (Chlorobium tepidum), this protein is Large ribosomal subunit protein bL32.